A 276-amino-acid polypeptide reads, in one-letter code: Plant cysteine oxidase 2 (276 aa).

The disordered stretch occupies residues 1–40 (MGTDTVMSGRVRKDLSKTNPNGNIPENRSNSRKKIQRRSK). The segment covering 17–28 (KTNPNGNIPENR) has biased composition (polar residues). Over residues 30-40 (NSRKKIQRRSK) the composition is skewed to basic residues. Residues H134, H136, and H197 each coordinate Fe cation.

This sequence belongs to the cysteine dioxygenase family. Fe(2+) is required as a cofactor.

The protein localises to the nucleus. It localises to the cytoplasm. It catalyses the reaction L-cysteine + O2 = 3-sulfino-L-alanine + H(+). In terms of biological role, catalyzes the oxidation of N-terminal cysteine residues (N-Cys), thus preparing the protein for N-end rule pathway-mediated proteasomal degradation, upstream of the N-end rule enzymes ATE1, ATE2 and PRT6. Controls the preparation of the group VII ethylene response factor (ERF-VII) proteins for degradation via the 26S proteasome N-end rule pathway. Acts as an oxygen sensor that controls the stability of ERF-VII proteins, which are stabilized in flooding-induced hypoxia, and regulate transcriptional adaptation to these adverse conditions. Not active on Cys located inside or at the C-terminus of a peptide. Acts redundantly with PCO1 to repress the anaerobic response. The polypeptide is Plant cysteine oxidase 2 (Arabidopsis thaliana (Mouse-ear cress)).